The primary structure comprises 340 residues: Phosphoribosylformylglycinamidine cyclo-ligase (340 aa).

The protein belongs to the AIR synthase family.

It localises to the cytoplasm. The catalysed reaction is 2-formamido-N(1)-(5-O-phospho-beta-D-ribosyl)acetamidine + ATP = 5-amino-1-(5-phospho-beta-D-ribosyl)imidazole + ADP + phosphate + H(+). It participates in purine metabolism; IMP biosynthesis via de novo pathway; 5-amino-1-(5-phospho-D-ribosyl)imidazole from N(2)-formyl-N(1)-(5-phospho-D-ribosyl)glycinamide: step 2/2. The chain is Phosphoribosylformylglycinamidine cyclo-ligase from Crocosphaera subtropica (strain ATCC 51142 / BH68) (Cyanothece sp. (strain ATCC 51142)).